Here is a 186-residue protein sequence, read N- to C-terminus: MSRDLILLGVIGRPHGVRGLVHVVSYTADPDDLTAYGLLHDEAGRQIMLDWRADGLAGITIDGVPVQDRSAAERLTNTRLFINRDALPPVEDEDDFYLVDLIGLEARLVADETLLGQVAQVHDYGAGASLEITRSGGASLLVPFTRAAVPVVDIAAGRVLIDPPQEENAPEFGRNELGHDDGGEAA.

The PRC barrel domain maps to 93 to 168 (EDDFYLVDLI…VLIDPPQEEN (76 aa)). Positions 163–186 (PPQEENAPEFGRNELGHDDGGEAA) are disordered. Positions 173–186 (GRNELGHDDGGEAA) are enriched in basic and acidic residues.

It belongs to the RimM family. As to quaternary structure, binds ribosomal protein uS19.

Its subcellular location is the cytoplasm. In terms of biological role, an accessory protein needed during the final step in the assembly of 30S ribosomal subunit, possibly for assembly of the head region. Essential for efficient processing of 16S rRNA. May be needed both before and after RbfA during the maturation of 16S rRNA. It has affinity for free ribosomal 30S subunits but not for 70S ribosomes. This chain is Ribosome maturation factor RimM, found in Granulibacter bethesdensis (strain ATCC BAA-1260 / CGDNIH1).